Here is a 365-residue protein sequence, read N- to C-terminus: Protein RecA (365 aa).

69 to 76 (GPESSGKT) is an ATP binding site. Positions 344-365 (LDDNPDTDDHDVEDIDENTDEE) are disordered. The span at 347–365 (NPDTDDHDVEDIDENTDEE) shows a compositional bias: acidic residues.

The protein belongs to the RecA family.

It is found in the cytoplasm. Functionally, can catalyze the hydrolysis of ATP in the presence of single-stranded DNA, the ATP-dependent uptake of single-stranded DNA by duplex DNA, and the ATP-dependent hybridization of homologous single-stranded DNAs. It interacts with LexA causing its activation and leading to its autocatalytic cleavage. In Arthrospira platensis (Spirulina platensis), this protein is Protein RecA.